The sequence spans 382 residues: Flap endonuclease 1 (382 aa).

The segment at 1-104 (MGILGLSKLI…GELAKRAERR (104 aa)) is N-domain. Mg(2+) is bound at residue D34. The DNA site is built by R47 and R70. Residue D86 coordinates Mg(2+). Residues 95–118 (GELAKRAERREDAQKALEKATEAG) are disordered. Positions 96–115 (ELAKRAERREDAQKALEKAT) are enriched in basic and acidic residues. The interval 122 to 253 (DMDKFNRRLV…KRATELMNSY (132 aa)) is I-domain. Residues E158, E160, D179, and D181 each contribute to the Mg(2+) site. E158 contacts DNA. DNA contacts are provided by G231 and D233. Residue D233 participates in Mg(2+) binding. The interaction with PCNA stretch occupies residues 336–344 (TQGRLDSFF). Residues 353-382 (TTPKRKADDKNNVQQKKSKTAGNTKGKRPK) are disordered. A compositionally biased stretch (polar residues) spans 364-375 (NVQQKKSKTAGN).

This sequence belongs to the XPG/RAD2 endonuclease family. FEN1 subfamily. Interacts with PCNA. Three molecules of FEN1 bind to one PCNA trimer with each molecule binding to one PCNA monomer. PCNA stimulates the nuclease activity without altering cleavage specificity. Mg(2+) is required as a cofactor. Post-translationally, phosphorylated. Phosphorylation upon DNA damage induces relocalization to the nuclear plasma.

It is found in the nucleus. Its subcellular location is the nucleolus. The protein localises to the nucleoplasm. It localises to the mitochondrion. Structure-specific nuclease with 5'-flap endonuclease and 5'-3' exonuclease activities involved in DNA replication and repair. During DNA replication, cleaves the 5'-overhanging flap structure that is generated by displacement synthesis when DNA polymerase encounters the 5'-end of a downstream Okazaki fragment. It enters the flap from the 5'-end and then tracks to cleave the flap base, leaving a nick for ligation. Also involved in the long patch base excision repair (LP-BER) pathway, by cleaving within the apurinic/apyrimidinic (AP) site-terminated flap. Acts as a genome stabilization factor that prevents flaps from equilibrating into structures that lead to duplications and deletions. Also possesses 5'-3' exonuclease activity on nicked or gapped double-stranded DNA, and exhibits RNase H activity. Also involved in replication and repair of rDNA and in repairing mitochondrial DNA. This Glossina morsitans morsitans (Savannah tsetse fly) protein is Flap endonuclease 1.